We begin with the raw amino-acid sequence, 441 residues long: Probable tRNA pseudouridine synthase D (441 aa).

The active-site Nucleophile is the Asp-89. The region spanning 168–393 is the TRUD domain; sequence GVPNFFGVQR…SKGTRREVLL (226 aa).

This sequence belongs to the pseudouridine synthase TruD family.

It carries out the reaction uridine(13) in tRNA = pseudouridine(13) in tRNA. Its function is as follows. Could be responsible for synthesis of pseudouridine from uracil-13 in transfer RNAs. The sequence is that of Probable tRNA pseudouridine synthase D from Methanosarcina acetivorans (strain ATCC 35395 / DSM 2834 / JCM 12185 / C2A).